Here is a 330-residue protein sequence, read N- to C-terminus: Flotillin-like protein FloA (330 aa).

The next 2 membrane-spanning stretches (helical) occupy residues 6-26 and 28-48; these read LFLLLIIAAGIILLAVFFTFV and VMLWISALAAGVKISIFTLIG.

Belongs to the flotillin-like FloA family. As to quaternary structure, homooligomerizes.

The protein localises to the cell membrane. The protein resides in the membrane raft. Functionally, found in functional membrane microdomains (FMM) that may be equivalent to eukaryotic membrane rafts. FMMs are highly dynamic and increase in number as cells age. Flotillins are thought to be important factors in membrane fluidity. The chain is Flotillin-like protein FloA from Bacillus licheniformis (strain ATCC 14580 / DSM 13 / JCM 2505 / CCUG 7422 / NBRC 12200 / NCIMB 9375 / NCTC 10341 / NRRL NRS-1264 / Gibson 46).